The sequence spans 214 residues: Type 4 apparatus protein DotN (214 aa).

Positions 52, 55, 84, and 87 each coordinate Zn(2+).

The T4BSS is a complex nanomachine composed of several subcomplexes. This subunit is part of the Type IV Coupling Complex (T4CC), a subcomplex composed of the DotLMNYZ core and the IcmSW-LvgA adapter subunits, linked by the C-terminal tail of DotL. Six DotLMNYZ hetero-pentameric units may assemble into a hexameric nanomachine, forming an inner membrane channel for effectors to pass through. Interacts directly with DotL. Interacts with DotZ.

It is found in the cytoplasm. Component of the Dot/Icm type IVB secretion system (T4BSS), which is used to inject bacterial effector proteins into eukaryotic host cells. Part of a subcomplex which recruits effector proteins and delivers them to the core transmembrane subcomplex. The chain is Type 4 apparatus protein DotN from Legionella pneumophila subsp. pneumophila (strain Philadelphia 1 / ATCC 33152 / DSM 7513).